The chain runs to 346 residues: Holliday junction branch migration complex subunit RuvB (346 aa).

A large ATPase domain (RuvB-L) region spans residues 1 to 182; it reads MSEAARLIAP…FGIPVRLNFY (182 aa). Residues Leu-21, Arg-22, Gly-63, Lys-66, Thr-67, Thr-68, 129–131, Arg-172, Tyr-182, and Arg-219 contribute to the ATP site; that span reads EDF. Thr-67 contributes to the Mg(2+) binding site. The tract at residues 183 to 253 is small ATPAse domain (RuvB-S); that stretch reads TVEELELIVR…IADEALTRLL (71 aa). The head domain (RuvB-H) stretch occupies residues 256 to 346; the sequence is SMGLDQLDRR…SQFRLTLEDD (91 aa). DNA contacts are provided by Arg-292, Arg-311, and Arg-316.

It belongs to the RuvB family. In terms of assembly, homohexamer. Forms an RuvA(8)-RuvB(12)-Holliday junction (HJ) complex. HJ DNA is sandwiched between 2 RuvA tetramers; dsDNA enters through RuvA and exits via RuvB. An RuvB hexamer assembles on each DNA strand where it exits the tetramer. Each RuvB hexamer is contacted by two RuvA subunits (via domain III) on 2 adjacent RuvB subunits; this complex drives branch migration. In the full resolvosome a probable DNA-RuvA(4)-RuvB(12)-RuvC(2) complex forms which resolves the HJ.

The protein resides in the cytoplasm. It carries out the reaction ATP + H2O = ADP + phosphate + H(+). In terms of biological role, the RuvA-RuvB-RuvC complex processes Holliday junction (HJ) DNA during genetic recombination and DNA repair, while the RuvA-RuvB complex plays an important role in the rescue of blocked DNA replication forks via replication fork reversal (RFR). RuvA specifically binds to HJ cruciform DNA, conferring on it an open structure. The RuvB hexamer acts as an ATP-dependent pump, pulling dsDNA into and through the RuvAB complex. RuvB forms 2 homohexamers on either side of HJ DNA bound by 1 or 2 RuvA tetramers; 4 subunits per hexamer contact DNA at a time. Coordinated motions by a converter formed by DNA-disengaged RuvB subunits stimulates ATP hydrolysis and nucleotide exchange. Immobilization of the converter enables RuvB to convert the ATP-contained energy into a lever motion, pulling 2 nucleotides of DNA out of the RuvA tetramer per ATP hydrolyzed, thus driving DNA branch migration. The RuvB motors rotate together with the DNA substrate, which together with the progressing nucleotide cycle form the mechanistic basis for DNA recombination by continuous HJ branch migration. Branch migration allows RuvC to scan DNA until it finds its consensus sequence, where it cleaves and resolves cruciform DNA. The sequence is that of Holliday junction branch migration complex subunit RuvB from Sinorhizobium medicae (strain WSM419) (Ensifer medicae).